Here is a 470-residue protein sequence, read N- to C-terminus: Maturase K (470 aa).

This sequence belongs to the intron maturase 2 family. MatK subfamily.

The protein resides in the plastid. The protein localises to the chloroplast. Usually encoded in the trnK tRNA gene intron. Probably assists in splicing its own and other chloroplast group II introns. This chain is Maturase K, found in Nypa fruticans (Nypa palm).